Reading from the N-terminus, the 220-residue chain is pH-response regulator palI/RIM9 homolog 1 (220 aa).

The Cytoplasmic portion of the chain corresponds to 1–5; sequence MSHFK. Residues 6–26 traverse the membrane as a helical segment; sequence IVFLTSLSLALVFELFNTISV. Residues 27-89 are Extracellular-facing; it reads PITSHLFISE…NHAKYALSKL (63 aa). The helical transmembrane segment at 90-110 threads the bilayer; that stretch reads LLVHVLSFVCVLVFWLFAILI. At 111–121 the chain is on the cytoplasmic side; that stretch reads CIKWLNTSKSV. A helical transmembrane segment spans residues 122–142; it reads LLFAVGWSMVTFMVSLLGFLI. The Extracellular segment spans residues 143 to 155; it reads DVLMFASHVTWSS. A helical transmembrane segment spans residues 156–176; the sequence is WLMLVSAFFVALSGILLCLMI. Residues 177 to 220 are Cytoplasmic-facing; that stretch reads RDLSYRRFVKLQGEVDVCVPMTEPRDPDELNEIWKKKTSKREIL.

Belongs to the palI/RIM9 family.

Its subcellular location is the cell membrane. Functionally, required for the proteolytic cleavage of the transcription factor RIM101 in response to alkaline ambient pH. This Kluyveromyces lactis (strain ATCC 8585 / CBS 2359 / DSM 70799 / NBRC 1267 / NRRL Y-1140 / WM37) (Yeast) protein is pH-response regulator palI/RIM9 homolog 1.